The following is a 372-amino-acid chain: Beta-1,4-galactosyltransferase 2 (372 aa).

Residues 1-15 lie on the Cytoplasmic side of the membrane; sequence MSRLLGGTLERVCKA. A helical; Signal-anchor for type II membrane protein membrane pass occupies residues 16-36; that stretch reads VLLLCLLHFLVAVILYFDVYA. Residues 37–372 lie on the Lumenal side of the membrane; it reads QHLAFFSRFS…GRPPSWPPRG (336 aa). Residues 56 to 97 are disordered; it reads PAASSSSSSSNCSRPNATASSSGLPEVPSALPGPTAPTLPPC. Residues asparagine 66 and asparagine 71 are each glycosylated (N-linked (GlcNAc...) asparagine). The span at 66 to 78 shows a compositional bias: polar residues; sequence NCSRPNATASSSG. Cysteine 97 and cysteine 139 are oxidised to a cystine. UDP-alpha-D-galactose is bound by residues 150–154, 189–191, 217–218, and tryptophan 278; these read PFRHR, FNR, and VD. Cysteine 211 and cysteine 230 are oxidised to a cystine. Aspartate 218 contributes to the Mn(2+) binding site. 280-283 lines the N-acetyl-D-glucosamine pocket; that stretch reads GEDD. Residue histidine 311 coordinates Mn(2+). 311-313 provides a ligand contact to UDP-alpha-D-galactose; it reads HDR. An N-acetyl-D-glucosamine-binding site is contributed by arginine 323. Asparagine 357 is a glycosylation site (N-linked (GlcNAc...) asparagine).

The protein belongs to the glycosyltransferase 7 family. Requires Mn(2+) as cofactor. In terms of tissue distribution, weakly expressed in various tissues. Highest expression in prostate, testis, ovary, intestine, muscle, and in fetal brain.

The protein localises to the golgi apparatus. Its subcellular location is the golgi stack membrane. The catalysed reaction is D-glucose + UDP-alpha-D-galactose = lactose + UDP + H(+). It catalyses the reaction an N-acetyl-beta-D-glucosaminyl derivative + UDP-alpha-D-galactose = a beta-D-galactosyl-(1-&gt;4)-N-acetyl-beta-D-glucosaminyl derivative + UDP + H(+). It carries out the reaction N-acetyl-D-glucosamine + UDP-alpha-D-galactose = beta-D-galactosyl-(1-&gt;4)-N-acetyl-D-glucosamine + UDP + H(+). It functions in the pathway protein modification; protein glycosylation. In terms of biological role, responsible for the synthesis of complex-type N-linked oligosaccharides in many glycoproteins as well as the carbohydrate moieties of glycolipids. Can produce lactose. In Homo sapiens (Human), this protein is Beta-1,4-galactosyltransferase 2.